The following is a 763-amino-acid chain: Phosphoglycerol transferase I (763 aa).

Transmembrane regions (helical) follow at residues 1 to 21 (MSEL…AWKA), 24 to 44 (NTWW…LNIT), 77 to 97 (ILPG…LGWI), and 108 to 128 (VGYS…SPAF).

Belongs to the OpgB family.

It is found in the cell inner membrane. The enzyme catalyses a phosphatidylglycerol + a membrane-derived-oligosaccharide D-glucose = a 1,2-diacyl-sn-glycerol + a membrane-derived-oligosaccharide 6-(glycerophospho)-D-glucose.. The protein operates within glycan metabolism; osmoregulated periplasmic glucan (OPG) biosynthesis. Transfers a phosphoglycerol residue from phosphatidylglycerol to the membrane-bound nascent glucan backbones. This is Phosphoglycerol transferase I from Salmonella arizonae (strain ATCC BAA-731 / CDC346-86 / RSK2980).